The following is a 375-amino-acid chain: MSPTLQLACDLISRASVTPEDAGCQALMTERLRAIGFHIESLRFDDVDNFWAVRGASGPILCFAGHTDVVPEGDPAKWQSPPYEPTITDGLLYGRGAADMKGSLAAMVTACEAFVAEHPNHTGRIAFLITSDEEGIAANGTVKVVEWLEARGEKVTWCLVGEPSSTQSVGDVIKNGRRGSLGCKLTVKGKQGHVAYPHLAKNPIHLVAPALADLAAEQWDEGNDFFPATSFQVSNFNAGTGATNVIPGEAAIVFNFRFSTESTADELKQRTEAILAKHGLDYDIHWHLSGEPFLTPAGALVDAAVTAIRAECGAEPELSTSGGTSDGRFIAPTGAQVLELGPVNATIHQINECVNVADLDKLSATYQRILKELLA.

Zn(2+) is bound at residue His66. Asp68 is an active-site residue. Asp99 is a binding site for Zn(2+). The active-site Proton acceptor is the Glu133. The Zn(2+) site is built by Glu134, Glu162, and His348.

This sequence belongs to the peptidase M20A family. DapE subfamily. As to quaternary structure, homodimer. Zn(2+) serves as cofactor. The cofactor is Co(2+).

It catalyses the reaction N-succinyl-(2S,6S)-2,6-diaminopimelate + H2O = (2S,6S)-2,6-diaminopimelate + succinate. It functions in the pathway amino-acid biosynthesis; L-lysine biosynthesis via DAP pathway; LL-2,6-diaminopimelate from (S)-tetrahydrodipicolinate (succinylase route): step 3/3. Catalyzes the hydrolysis of N-succinyl-L,L-diaminopimelic acid (SDAP), forming succinate and LL-2,6-diaminopimelate (DAP), an intermediate involved in the bacterial biosynthesis of lysine and meso-diaminopimelic acid, an essential component of bacterial cell walls. This chain is Succinyl-diaminopimelate desuccinylase, found in Teredinibacter turnerae (strain ATCC 39867 / T7901).